The following is a 94-amino-acid chain: Large ribosomal subunit protein eL42 (94 aa).

Residues C11, C14, C70, and C73 each coordinate Zn(2+). Residues 11-73 form a C4-type zinc finger; the sequence is CPYCKKHTIH…IDLRFKCTEC (63 aa).

It belongs to the eukaryotic ribosomal protein eL42 family. As to quaternary structure, part of the 50S ribosomal subunit. Zn(2+) is required as a cofactor.

In terms of biological role, binds to the 23S rRNA. The protein is Large ribosomal subunit protein eL42 of Methanocaldococcus jannaschii (strain ATCC 43067 / DSM 2661 / JAL-1 / JCM 10045 / NBRC 100440) (Methanococcus jannaschii).